Consider the following 284-residue polypeptide: uncharacterized protein (284 aa).

The signal sequence occupies residues 1-23 (MKRGCAIAVMICGLITSVSAASA).

It belongs to the surface antigen msp4 family.

This is an uncharacterized protein from Brucella suis biovar 1 (strain 1330).